The chain runs to 241 residues: Biosynthetic peptidoglycan transglycosylase (241 aa).

Residues 18–38 (GVIGIIALWMAGILIFAFLPV) form a helical membrane-spanning segment.

It belongs to the glycosyltransferase 51 family.

Its subcellular location is the cell inner membrane. It catalyses the reaction [GlcNAc-(1-&gt;4)-Mur2Ac(oyl-L-Ala-gamma-D-Glu-L-Lys-D-Ala-D-Ala)](n)-di-trans,octa-cis-undecaprenyl diphosphate + beta-D-GlcNAc-(1-&gt;4)-Mur2Ac(oyl-L-Ala-gamma-D-Glu-L-Lys-D-Ala-D-Ala)-di-trans,octa-cis-undecaprenyl diphosphate = [GlcNAc-(1-&gt;4)-Mur2Ac(oyl-L-Ala-gamma-D-Glu-L-Lys-D-Ala-D-Ala)](n+1)-di-trans,octa-cis-undecaprenyl diphosphate + di-trans,octa-cis-undecaprenyl diphosphate + H(+). It functions in the pathway cell wall biogenesis; peptidoglycan biosynthesis. Its function is as follows. Peptidoglycan polymerase that catalyzes glycan chain elongation from lipid-linked precursors. The sequence is that of Biosynthetic peptidoglycan transglycosylase from Yersinia pestis bv. Antiqua (strain Antiqua).